We begin with the raw amino-acid sequence, 1184 residues long: DNA-directed RNA polymerase subunit beta (1184 aa).

The tract at residues 1160–1184 is disordered; it reads DDDFTNQNDAFNIVQPENAAAEKTE.

The protein belongs to the RNA polymerase beta chain family. The RNAP catalytic core consists of 2 alpha, 1 beta, 1 beta' and 1 omega subunit. When a sigma factor is associated with the core the holoenzyme is formed, which can initiate transcription.

The catalysed reaction is RNA(n) + a ribonucleoside 5'-triphosphate = RNA(n+1) + diphosphate. DNA-dependent RNA polymerase catalyzes the transcription of DNA into RNA using the four ribonucleoside triphosphates as substrates. In Listeria monocytogenes serotype 4b (strain F2365), this protein is DNA-directed RNA polymerase subunit beta.